A 165-amino-acid chain; its full sequence is Protein SprT (165 aa).

The 142-residue stretch at 22–163 (LAQANLKLDR…RCVHCGEPLV (142 aa)) folds into the SprT-like domain. A Zn(2+)-binding site is contributed by His78. Glu79 is a catalytic residue. Residue His82 participates in Zn(2+) binding.

Belongs to the SprT family. Zn(2+) serves as cofactor.

It is found in the cytoplasm. The protein is Protein SprT of Salmonella paratyphi A (strain ATCC 9150 / SARB42).